An 89-amino-acid chain; its full sequence is RNA-binding protein Hfq (89 aa).

Residues 14 to 73 (DPYLNALRKEKINVAIYLVNGVKLQGRVDSFDQFVVLLRSNVTQMVYKHAISTIVPARDP) enclose the Sm domain.

It belongs to the Hfq family. In terms of assembly, homohexamer.

Its function is as follows. RNA chaperone that binds small regulatory RNA (sRNAs) and mRNAs to facilitate mRNA translational regulation in response to envelope stress, environmental stress and changes in metabolite concentrations. Also binds with high specificity to tRNAs. The sequence is that of RNA-binding protein Hfq from Hydrogenovibrio crunogenus (strain DSM 25203 / XCL-2) (Thiomicrospira crunogena).